A 483-amino-acid polypeptide reads, in one-letter code: Glutamyl-tRNA(Gln) amidotransferase subunit A (483 aa).

Active-site charge relay system residues include Lys77 and Ser152. Ser176 (acyl-ester intermediate) is an active-site residue.

It belongs to the amidase family. GatA subfamily. Heterotrimer of A, B and C subunits.

The enzyme catalyses L-glutamyl-tRNA(Gln) + L-glutamine + ATP + H2O = L-glutaminyl-tRNA(Gln) + L-glutamate + ADP + phosphate + H(+). In terms of biological role, allows the formation of correctly charged Gln-tRNA(Gln) through the transamidation of misacylated Glu-tRNA(Gln) in organisms which lack glutaminyl-tRNA synthetase. The reaction takes place in the presence of glutamine and ATP through an activated gamma-phospho-Glu-tRNA(Gln). This chain is Glutamyl-tRNA(Gln) amidotransferase subunit A, found in Listeria innocua serovar 6a (strain ATCC BAA-680 / CLIP 11262).